The following is a 490-amino-acid chain: GTPase Der (490 aa).

EngA-type G domains follow at residues 3–166 (PVVA…MEDL) and 203–376 (IKLA…DSST). GTP is bound by residues 9–16 (GRPNVGKS), 56–60 (DTGGI), 118–121 (NKTD), 209–216 (GRPNVGKS), 256–260 (DTAGV), and 321–324 (NKWD). The 85-residue stretch at 377–461 (RRVGTSMLTR…PIRIQFKEGE (85 aa)) folds into the KH-like domain.

The protein belongs to the TRAFAC class TrmE-Era-EngA-EngB-Septin-like GTPase superfamily. EngA (Der) GTPase family. In terms of assembly, associates with the 50S ribosomal subunit.

GTPase that plays an essential role in the late steps of ribosome biogenesis. This chain is GTPase Der, found in Escherichia coli O17:K52:H18 (strain UMN026 / ExPEC).